The sequence spans 508 residues: Inosine-5'-monophosphate dehydrogenase (508 aa).

CBS domains lie at 111-170 (FITD…EITL) and 174-230 (MTTN…PDAS). Residues aspartate 267 and 317-319 (GMG) each bind NAD(+). Residues glycine 319 and glycine 321 each coordinate K(+). An IMP-binding site is contributed by serine 322. Cysteine 324 serves as a coordination point for K(+). The active-site Thioimidate intermediate is the cysteine 324. Residues 357 to 359 (DGG), 380 to 381 (GF), and 404 to 408 (YRGMA) each bind IMP. Arginine 420 functions as the Proton acceptor in the catalytic mechanism. Glutamine 432 is an IMP binding site. Residue glycine 492 participates in K(+) binding.

This sequence belongs to the IMPDH/GMPR family. Homotetramer. Requires K(+) as cofactor.

The catalysed reaction is IMP + NAD(+) + H2O = XMP + NADH + H(+). It participates in purine metabolism; XMP biosynthesis via de novo pathway; XMP from IMP: step 1/1. Mycophenolic acid (MPA) is a non-competitive inhibitor that prevents formation of the closed enzyme conformation by binding to the same site as the amobile flap. In contrast, mizoribine monophosphate (MZP) is a competitive inhibitor that induces the closed conformation. MPA is a potent inhibitor of mammalian IMPDHs but a poor inhibitor of the bacterial enzymes. MZP is a more potent inhibitor of bacterial IMPDH. In terms of biological role, catalyzes the conversion of inosine 5'-phosphate (IMP) to xanthosine 5'-phosphate (XMP), the first committed and rate-limiting step in the de novo synthesis of guanine nucleotides, and therefore plays an important role in the regulation of cell growth. This is Inosine-5'-monophosphate dehydrogenase from Leptospira interrogans serogroup Icterohaemorrhagiae serovar Lai (strain 56601).